The primary structure comprises 169 residues: Peptide deformylase (169 aa).

2 residues coordinate Fe cation: Cys-91 and His-133. The active site involves Glu-134. His-137 is a Fe cation binding site.

This sequence belongs to the polypeptide deformylase family. Requires Fe(2+) as cofactor.

The enzyme catalyses N-terminal N-formyl-L-methionyl-[peptide] + H2O = N-terminal L-methionyl-[peptide] + formate. Functionally, removes the formyl group from the N-terminal Met of newly synthesized proteins. Requires at least a dipeptide for an efficient rate of reaction. N-terminal L-methionine is a prerequisite for activity but the enzyme has broad specificity at other positions. This Escherichia coli (strain SMS-3-5 / SECEC) protein is Peptide deformylase.